Consider the following 35-residue polypeptide: Cupiennin-2e (35 aa).

The residue at position 35 (glutamate 35) is a Glutamic acid 1-amide.

Expressed by the venom gland.

It is found in the secreted. This Cupiennius salei (American wandering spider) protein is Cupiennin-2e.